We begin with the raw amino-acid sequence, 501 residues long: Cytochrome P450 4c21 (501 aa).

Heme contacts are provided by glutamate 309 and cysteine 447.

Belongs to the cytochrome P450 family. The cofactor is heme.

The protein localises to the endoplasmic reticulum membrane. It localises to the microsome membrane. The enzyme catalyses an organic molecule + reduced [NADPH--hemoprotein reductase] + O2 = an alcohol + oxidized [NADPH--hemoprotein reductase] + H2O + H(+). The chain is Cytochrome P450 4c21 (CYP4C21) from Blattella germanica (German cockroach).